The chain runs to 763 residues: MAP7 domain-containing protein 2 (763 aa).

Over residues 1–11 the composition is skewed to gly residues; that stretch reads MERSGGNGAGA. 3 disordered regions span residues 1–72, 102–127, and 140–531; these read MERS…REKC, LEEQRQREDQKRAAVEEKRKQKLREE, and ERTQ…KAMI. The span at 12–31 shows a compositional bias: low complexity; sequence RAGAPSEGAAKGSSLLSAKS. A compositionally biased stretch (basic and acidic residues) spans 53–72; sequence LKSDERQRLAKERREEREKC. Polar residues-rich tracts occupy residues 184–212 and 241–251; these read PSDTGTATAAAESTNACDKLSTSTMNLPK and LKSSYKSSPTR. The span at 312–321 shows a compositional bias: low complexity; it reads KRSSSPVKSK. 3 stretches are compositionally biased toward basic and acidic residues: residues 354-372, 381-420, and 437-531; these read ETLKKKAEKEKSNKEKEGA, PREETLEKPMADKDATEKYVADKHATEKHSATGGKAEHSA, and LAEK…KAMI. Residues 434–575 adopt a coiled-coil conformation; it reads AKILAEKRRQ…QERLERKKRI (142 aa).

The protein belongs to the MAP7 family. As to quaternary structure, interacts (via N-terminus) with microtubules; facilitates microtubule stabilization. Interacts with kinesin-1 family members, KIF5A, KIF5B and KIF5C. In terms of tissue distribution, detected only in the brain and testis (at the protein level).

It localises to the cytoplasm. The protein resides in the cytoskeleton. It is found in the microtubule organizing center. The protein localises to the centrosome. Its subcellular location is the cell projection. It localises to the axon. Functionally, microtubule-stabilizing protein involved in the control of cell motility and neurite outgrowth. Acts as a critical cofactor for kinesin transport; in the proximal axon regulates kinesin-1 family members, KIF5A, KIF5B and KIF5C recruitment to microtubules and contributes to kinesin-1-mediated transport in the axons. This Rattus norvegicus (Rat) protein is MAP7 domain-containing protein 2 (Map7d2).